The following is an 843-amino-acid chain: Protein P (843 aa).

The tract at residues 1-177 is terminal protein domain (TP); the sequence is MPLSYQHFRR…FCGSPYSWEQ (177 aa). Positions 178–346 are spacer; it reads ELQHGSTSLN…YCLSHIINLL (169 aa). Disordered stretches follow at residues 180-202 and 226-315; these read QHGSTSLNGEKGHGTEPFCAQSS and QHKQ…VGSE. Over residues 239 to 249 the composition is skewed to basic residues; sequence RSGRLRSRVHT. Composition is skewed to polar residues over residues 262-277 and 287-299; these read TGHSDNLATRSTSCFH and PSLSTSKGHTSTG. A polymerase/reverse transcriptase domain (RT) region spans residues 347–690; that stretch reads EDWGPCYEHG…YMNLYPVARQ (344 aa). The Reverse transcriptase domain maps to 357–600; that stretch reads EHHIRTPKTP…YSLHFMGYII (244 aa). Mg(2+) contacts are provided by D429, D551, and D552.

It belongs to the hepadnaviridae P protein family.

The catalysed reaction is DNA(n) + a 2'-deoxyribonucleoside 5'-triphosphate = DNA(n+1) + diphosphate. It catalyses the reaction Endonucleolytic cleavage to 5'-phosphomonoester.. Its activity is regulated as follows. Activated by host HSP70 and HSP40 in vitro to be able to bind the epsilon loop of the pgRNA. Because deletion of the RNase H region renders the protein partly chaperone-independent, the chaperones may be needed indirectly to relieve occlusion of the RNA-binding site by this domain. Inhibited by several reverse-transcriptase inhibitors: Lamivudine, Adefovir and Entecavir. In terms of biological role, multifunctional enzyme that converts the viral RNA genome into dsDNA in viral cytoplasmic capsids. This enzyme displays a DNA polymerase activity that can copy either DNA or RNA templates, and a ribonuclease H (RNase H) activity that cleaves the RNA strand of RNA-DNA heteroduplexes in a partially processive 3'- to 5'-endonucleasic mode. Neo-synthesized pregenomic RNA (pgRNA) are encapsidated together with the P protein, and reverse-transcribed inside the nucleocapsid. Initiation of reverse-transcription occurs first by binding the epsilon loop on the pgRNA genome, and is initiated by protein priming, thereby the 5'-end of (-)DNA is covalently linked to P protein. Partial (+)DNA is synthesized from the (-)DNA template and generates the relaxed circular DNA (RC-DNA) genome. After budding and infection, the RC-DNA migrates in the nucleus, and is converted into a plasmid-like covalently closed circular DNA (cccDNA). The activity of P protein does not seem to be necessary for cccDNA generation, and is presumably released from (+)DNA by host nuclear DNA repair machinery. The sequence is that of Protein P from Hepatitis B virus genotype H (isolate United States/LAS2523/2002) (HBV-H).